Reading from the N-terminus, the 220-residue chain is 7-cyano-7-deazaguanine synthase 1 (220 aa).

Residue 10–20 (FSGGIDSTVLL) participates in ATP binding. Zn(2+) contacts are provided by C183, C191, C194, and C197.

Belongs to the QueC family. As to quaternary structure, homodimer. Requires Zn(2+) as cofactor.

It catalyses the reaction 7-carboxy-7-deazaguanine + NH4(+) + ATP = 7-cyano-7-deazaguanine + ADP + phosphate + H2O + H(+). Its pathway is purine metabolism; 7-cyano-7-deazaguanine biosynthesis. In terms of biological role, catalyzes the ATP-dependent conversion of 7-carboxy-7-deazaguanine (CDG) to 7-cyano-7-deazaguanine (preQ(0)). This chain is 7-cyano-7-deazaguanine synthase 1, found in Desulfitobacterium hafniense (strain Y51).